The sequence spans 306 residues: Phenylcoumaran benzylic ether reductase IRL1 (306 aa).

Residues 10–16 (GATGYIG), R35, and K44 contribute to the NADP(+) site. Residue K132 is the Proton acceptor of the active site. Residue R136 coordinates NADP(+).

It belongs to the NmrA-type oxidoreductase family. Isoflavone reductase subfamily. Highly expressed in sclerotesta. Expressed in roots, and two-to-four year stems.

The catalysed reaction is (-)-dehydrodiconiferyl alcohol + NADPH + H(+) = (S)-isodihydrodehydrodiconiferyl alcohol + NADP(+). The enzyme catalyses (+)-dehydrodiconiferyl alcohol + NADPH + H(+) = (R)-isodihydrodehydrodiconiferyl alcohol + NADP(+). It catalyses the reaction (2R,3S)-dihydrodehydrodiconiferyl alcohol + NADPH + H(+) = (S)-tetrahydrodehydrodiconiferyl alcohol + NADP(+). It carries out the reaction (2S,3R)-dihydrodehydrodiconiferyl alcohol + NADPH + H(+) = (R)-tetrahydrodehydrodiconiferyl alcohol + NADP(+). Functionally, oxidoreductase involved in lignan biosynthesis. Catalyzes the NADPH-dependent reduction of phenylcoumaran benzylic ethers. Converts dehydrodiconiferyl alcohol (DDC) to isodihydrodehydrodiconiferyl alcohol (IDDDC), and dihydrodehydrodiconiferyl alcohol (DDDC) to tetrahydrodehydrodiconiferyl alcohol (TDDC). May regulate changes in lignin content and accumulation of flavonoids. The polypeptide is Phenylcoumaran benzylic ether reductase IRL1 (Ginkgo biloba (Ginkgo)).